The following is a 1292-amino-acid chain: Sorbin and SH3 domain-containing protein 1 (1292 aa).

Disordered regions lie at residues 1–29 (MSSE…ATAD), 73–158 (LRAS…AQPE), 214–275 (HLQR…SSPL), and 318–381 (REQQ…MDEV). Residues 74–89 (RASSSYRETPSSSPAS) are compositionally biased toward low complexity. Position 82 is a phosphothreonine (T82). Residues S86 and S89 each carry the phosphoserine modification. The segment covering 93 to 102 (TRQHESKPGL) has biased composition (basic and acidic residues). E105, L114, V137, S146, S242, and S259 each carry phosphoserine. The segment covering 114–128 (LSSSADANGNAQPSS) has biased composition (polar residues). Pro residues predominate over residues 240-252 (SFSPPPPLVPPAP). Over residues 266-275 (AVSSTDSSPL) the composition is skewed to polar residues. A Phosphoserine modification is found at S341. T344 is subject to Phosphothreonine. Residues E346 and S350 each carry the phosphoserine modification. Basic and acidic residues predominate over residues 354 to 365 (AIEKRAKDDSRR). In terms of domain architecture, SoHo spans 366-469 (VVKSTQDLSD…YSPRYSFSED (104 aa)). S369, S374, and N387 each carry phosphoserine. Residues 405–534 (LNRDTPEENP…TRKYRAEPKS (130 aa)) form a disordered region. Over residues 437-450 (YTPTYQFPASTPSP) the composition is skewed to polar residues. A phosphoserine mark is found at S452, S465, D469, S472, R478, and S481. Residues 510-534 (SSERNDWEPPDKKVDTRKYRAEPKS) show a composition bias toward basic and acidic residues. Y536 carries the post-translational modification Phosphotyrosine; by ABL1. Residues S556, N603, S609, and S640 each carry the phosphoserine modification. The segment at 628–650 (APSANVPQSSAISPTPEISSETP) is disordered. Phosphotyrosine; by ABL1 is present on Y654. S665 and K700 each carry phosphoserine. The disordered stretch occupies residues 692–716 (PLQGLSGLKRPSSSASTKDSESPRH). T708 carries the phosphothreonine modification. Phosphoserine is present on residues S713, I730, D735, and I765. In terms of domain architecture, SH3 1 spans 793 to 852 (SEMRPARAKFDFKAQTLKELPLQKGDIVYIYKQIDQNWYEGEHHGRVGIFPRTYIELLPP). Phosphothreonine is present on T862. Residues 867-928 (LEYGEAIAKF…PITYVDVIKR (62 aa)) enclose the SH3 2 domain. V923 bears the Phosphoserine mark. Y937 is subject to Phosphotyrosine. The span at 944 to 954 (SSPSRSATASP) shows a compositional bias: low complexity. Disordered regions lie at residues 944-976 (SSPS…SRRA), 1041-1064 (SDRP…TYSL), 1106-1150 (QLSD…KKSC), and 1162-1230 (TEQR…SQTS). Phosphoserine occurs at positions 945 and 953. Residues 955–971 (QFSSHSKLITPAPSSLP) are compositionally biased toward polar residues. The segment covering 1106–1117 (QLSDAFSSQSKR) has biased composition (polar residues). The segment covering 1119-1136 (PWREESGQYERKAERGAG) has biased composition (basic and acidic residues). A compositionally biased stretch (polar residues) spans 1162–1172 (TEQRLSDLNTP). Basic and acidic residues predominate over residues 1192–1203 (QTERHRGGEQAG). Polar residues predominate over residues 1211-1230 (GSQQPQAQQRRVTPDRSQTS). Position 1213 is a phosphoserine (Q1213). The SH3 3 domain maps to 1231–1292 (QDLFSYQALY…PGNYVKPLYL (62 aa)). Y1240 carries the phosphotyrosine; by ABL1 modification.

As to quaternary structure, interacts (via third SH3 domain) with the Ten-1 ICD form of TENM1; the interaction induces the translocation of SORBS1 to the nucleus. Interacts with INSM1. Interacts with the long isoform of AFDN and with VCL. AFDN and VCL bind to SORBS1 in a competitive manner and do not form a ternary complex. Interacts with ABL1, CBL, CBLB and INPPL1/SHIP2 through the third SH3 domain. Interaction with ABL1 occurs only after insulin stimulation while this has no effect on the interaction with INPPL1. Interacts with the insulin receptor but dissociates from it following insulin stimulation. Also interacts with SCA7, PTK2/FAK1 and flotillin. Interacts (via SH3 domain 2) with PXN. O-glycosylated. Detected in skeletal muscle (at protein level). Widely expressed with highest levels in heart and skeletal muscle.

It is found in the cell junction. The protein resides in the adherens junction. The protein localises to the cell membrane. Its subcellular location is the cytoplasm. It localises to the cytoskeleton. It is found in the focal adhesion. The protein resides in the nucleus. The protein localises to the nucleus matrix. Functionally, plays a role in tyrosine phosphorylation of CBL by linking CBL to the insulin receptor. Required for insulin-stimulated glucose transport. Involved in formation of actin stress fibers and focal adhesions. The chain is Sorbin and SH3 domain-containing protein 1 from Homo sapiens (Human).